A 142-amino-acid polypeptide reads, in one-letter code: Hemoglobin subunit alpha (142 aa).

Residues 2–142 (KLSAEDKHNV…VGHVLTSKYR (141 aa)) enclose the Globin domain. Residue H59 participates in O2 binding. H88 contributes to the heme b binding site.

It belongs to the globin family. Heterotetramer of two alpha chains and two beta chains. As to expression, red blood cells.

Its function is as follows. Involved in oxygen transport from the lung to the various peripheral tissues. This Taricha granulosa (Roughskin newt) protein is Hemoglobin subunit alpha (HBA).